A 199-amino-acid chain; its full sequence is Urease accessory protein UreG (199 aa).

8–15 contacts GTP; sequence GPVGSGKT.

It belongs to the SIMIBI class G3E GTPase family. UreG subfamily. In terms of assembly, homodimer. UreH, UreF and UreG form a complex that acts as a GTP-hydrolysis-dependent molecular chaperone, activating the urease apoprotein by helping to assemble the nickel containing metallocenter of UreC. The UreE protein probably delivers the nickel.

The protein localises to the cytoplasm. Functionally, facilitates the functional incorporation of the urease nickel metallocenter. This process requires GTP hydrolysis, probably effectuated by UreG. The polypeptide is Urease accessory protein UreG (Helicobacter pylori (strain G27)).